We begin with the raw amino-acid sequence, 356 residues long: UDP-3-O-acylglucosamine N-acyltransferase (356 aa).

H242 serves as the catalytic Proton acceptor.

The protein belongs to the transferase hexapeptide repeat family. LpxD subfamily. As to quaternary structure, homotrimer.

It catalyses the reaction a UDP-3-O-[(3R)-3-hydroxyacyl]-alpha-D-glucosamine + a (3R)-hydroxyacyl-[ACP] = a UDP-2-N,3-O-bis[(3R)-3-hydroxyacyl]-alpha-D-glucosamine + holo-[ACP] + H(+). It functions in the pathway bacterial outer membrane biogenesis; LPS lipid A biosynthesis. In terms of biological role, catalyzes the N-acylation of UDP-3-O-acylglucosamine using 3-hydroxyacyl-ACP as the acyl donor. Is involved in the biosynthesis of lipid A, a phosphorylated glycolipid that anchors the lipopolysaccharide to the outer membrane of the cell. This chain is UDP-3-O-acylglucosamine N-acyltransferase, found in Acinetobacter baylyi (strain ATCC 33305 / BD413 / ADP1).